The chain runs to 163 residues: Photosystem II extrinsic protein V (163 aa).

An N-terminal signal peptide occupies residues Met-1–Ala-26. Residues Cys-63, Cys-66, His-67, and Met-130 each contribute to the heme c site.

It belongs to the cytochrome c family. PsbV subfamily. In terms of assembly, PSII is composed of 1 copy each of membrane proteins PsbA, PsbB, PsbC, PsbD, PsbE, PsbF, PsbH, PsbI, PsbJ, PsbK, PsbL, PsbM, PsbT, PsbY, PsbZ, Psb30/Ycf12, at least 3 peripheral proteins of the oxygen-evolving complex and a large number of cofactors. It forms dimeric complexes. Heme c serves as cofactor.

The protein localises to the plastid. The protein resides in the chloroplast thylakoid membrane. Functionally, one of the extrinsic, lumenal subunits of photosystem II (PSII). PSII is a light-driven water plastoquinone oxidoreductase, using light energy to abstract electrons from H(2)O, generating a proton gradient subsequently used for ATP formation. The extrinsic proteins stabilize the structure of photosystem II oxygen-evolving complex (OEC), the ion environment of oxygen evolution and protect the OEC against heat-induced inactivation. The chain is Photosystem II extrinsic protein V from Thalassiosira pseudonana (Marine diatom).